Here is a 138-residue protein sequence, read N- to C-terminus: DNA-directed RNA polymerase subunit omega (138 aa).

Positions 104 to 138 (GNSDGLENSSNSRDDNPLGRDNFFSTPENRNNTNS) are disordered. Positions 126 to 138 (FFSTPENRNNTNS) are enriched in polar residues.

It belongs to the RNA polymerase subunit omega family. In terms of assembly, the RNAP catalytic core consists of 2 alpha, 1 beta, 1 beta' and 1 omega subunit. When a sigma factor is associated with the core the holoenzyme is formed, which can initiate transcription.

It catalyses the reaction RNA(n) + a ribonucleoside 5'-triphosphate = RNA(n+1) + diphosphate. Its function is as follows. Promotes RNA polymerase assembly. Latches the N- and C-terminal regions of the beta' subunit thereby facilitating its interaction with the beta and alpha subunits. The sequence is that of DNA-directed RNA polymerase subunit omega from Ehrlichia chaffeensis (strain ATCC CRL-10679 / Arkansas).